The following is a 489-amino-acid chain: Cobyric acid synthase (489 aa).

The GATase cobBQ-type domain occupies 251 to 439 (RLTVVAPVYP…LHGLFDTPAA (189 aa)). Residue cysteine 332 is the Nucleophile of the active site. Histidine 431 is a catalytic residue.

It belongs to the CobB/CobQ family. CobQ subfamily.

It participates in cofactor biosynthesis; adenosylcobalamin biosynthesis. Functionally, catalyzes amidations at positions B, D, E, and G on adenosylcobyrinic A,C-diamide. NH(2) groups are provided by glutamine, and one molecule of ATP is hydrogenolyzed for each amidation. This chain is Cobyric acid synthase, found in Aromatoleum aromaticum (strain DSM 19018 / LMG 30748 / EbN1) (Azoarcus sp. (strain EbN1)).